The chain runs to 427 residues: Phosphatidylinositol 4-phosphate 5-kinase 10 (427 aa).

The 419-residue stretch at 1-419 (MFTREITAKD…RFQDFVSQIF (419 aa)) folds into the PIPK domain. Disordered regions lie at residues 247-287 (SRGS…DSEN) and 334-355 (MKIP…VGKQ). The segment at 379 to 400 (YGVRKRLEHCYKSIQHSSKTIS) is activation loop.

The enzyme catalyses a 1,2-diacyl-sn-glycero-3-phospho-(1D-myo-inositol 4-phosphate) + ATP = a 1,2-diacyl-sn-glycero-3-phospho-(1D-myo-inositol-4,5-bisphosphate) + ADP + H(+). The chain is Phosphatidylinositol 4-phosphate 5-kinase 10 (PIP5K10) from Arabidopsis thaliana (Mouse-ear cress).